We begin with the raw amino-acid sequence, 2032 residues long: Transient receptor potential channel (2032 aa).

The segment covering 129 to 139 (KKTRKHRRRRS) has biased composition (basic residues). Disordered stretches follow at residues 129–162 (KKTR…GHAI), 197–223 (QSKG…AVPT), 831–860 (KKAM…MGGV), 912–945 (ANPM…GSQT), and 1120–1211 (AAEH…EAGN). Composition is skewed to polar residues over residues 839–855 (SRPS…QSTE), 935–945 (SLTSASDGSQT), and 1120–1129 (AAEHQNDMNY). Positions 1130 to 1149 (SSSSSSSSSSSSSSSSSDSS) are enriched in low complexity. Residues 1171–1185 (TSQGSAQSLNITSLF) show a composition bias toward polar residues. 5 helical membrane passes run 1310–1330 (FWSW…TLLV), 1332–1352 (TPPR…AFGL), 1374–1394 (VCSF…VGFF), 1439–1459 (MIQN…SFGL), and 1535–1555 (LMTF…IAIF). Disordered regions lie at residues 1753-1779 (GTDP…RIRR), 1853-1909 (HPER…SRDQ), 1935-1982 (EEED…EEVD), and 1999-2032 (LNEE…CSDV). The span at 1935–1947 (EEEDEEEDDEEDD) shows a compositional bias: acidic residues. Over residues 1951–1962 (RHHIHPRRKSSR) the composition is skewed to basic residues. Polar residues predominate over residues 2016-2032 (SPSSSRADLTSQKCSDV).

This sequence belongs to the transient receptor (TC 1.A.4) family. LTrpC subfamily. As to expression, gonads.

It is found in the membrane. Required for initiation and continuation of postembryonic mitotic cell divisions of gonadal cells Z1 and Z4. Zygotic expression is necessary for hermaphrodite fertility. May be a cation channel. This chain is Transient receptor potential channel (gon-2), found in Caenorhabditis elegans.